The chain runs to 312 residues: MSIEHTSHDPSKPDPAKARTLAAALPWLKRYHGKIVVVKYGGNAMTDETLKRAFAEDIAFLRFAGFKPVVVHGGGPQISTMLDRLGIRSEFRGGLRVTTPEAMDVVRMVLVGQVQRELVGLINEHGPLAVGCSGEDAGLFTAEPANTVIDGEEVDLGLVGEVARVRPESVLDLIEAGRIPVVSSVAPDADGQVHNVNADSAAAALAVALGAEKLLVLTDVEGLYLDWPSSDDVIGEISPEALEEILPTLASGMVPKMGACLQAVRNGVPRATVVDGREPHAVLLELFTNEGVGTQVLPGVETKTRKARDTQS.

Substrate contacts are provided by residues 74–75, Arg-96, and Asn-195; that span reads GG.

The protein belongs to the acetylglutamate kinase family. ArgB subfamily.

The protein localises to the cytoplasm. It carries out the reaction N-acetyl-L-glutamate + ATP = N-acetyl-L-glutamyl 5-phosphate + ADP. It functions in the pathway amino-acid biosynthesis; L-arginine biosynthesis; N(2)-acetyl-L-ornithine from L-glutamate: step 2/4. In terms of biological role, catalyzes the ATP-dependent phosphorylation of N-acetyl-L-glutamate. The polypeptide is Acetylglutamate kinase (Nocardioides sp. (strain ATCC BAA-499 / JS614)).